The following is a 287-amino-acid chain: Fructose-1,6-bisphosphatase class 1 (287 aa).

Positions 67, 86, 88, and 89 each coordinate Mg(2+). Substrate is bound by residues 89–92 (DGSS), Tyr195, and Lys226. Glu232 serves as a coordination point for Mg(2+).

Belongs to the FBPase class 1 family. Homotetramer. Requires Mg(2+) as cofactor.

Its subcellular location is the cytoplasm. It carries out the reaction beta-D-fructose 1,6-bisphosphate + H2O = beta-D-fructose 6-phosphate + phosphate. It participates in carbohydrate biosynthesis; gluconeogenesis. This chain is Fructose-1,6-bisphosphatase class 1, found in Campylobacter concisus (strain 13826).